Here is an 881-residue protein sequence, read N- to C-terminus: Sodium/potassium/calcium exchanger Nckx30C (881 aa).

Topologically, residues 1–194 are extracellular; the sequence is MLQPTTCSKQ…SRCRSRRCLR (194 aa). N-linked (GlcNAc...) asparagine glycosylation is present at Asn69. 4 disordered regions span residues 79–111, 149–181, 215–255, and 272–315; these read DMLSAGRSRSSSTTIDFNSRRRRGRLRGHAPSD, AKTRSRTAAQLPATSAASATSSRGASAEQLLHP, AAKP…TSGE, and GLEE…TTKT. Polar residues predominate over residues 85–95; that stretch reads RSRSSSTTIDF. Residues 149–175 show a composition bias toward low complexity; the sequence is AKTRSRTAAQLPATSAASATSSRGASA. Residues 195-215 form a helical membrane-spanning segment; it reads LPIYSILLLCLTTQGLGLGDA. The Cytoplasmic portion of the chain corresponds to 216–330; it reads AKPRPAKQHF…DLFTKEQLEN (115 aa). Low complexity predominate over residues 228 to 240; the sequence is SNSNSPNQNQNHN. Residues 296–315 are compositionally biased toward polar residues; the sequence is AGNQRGINDTHNDNSTTTKT. Residues 331-351 form a helical membrane-spanning segment; it reads GAVILHIIGVIYMFVALAIVC. Residues 352–375 lie on the Extracellular side of the membrane; it reads DEFFVPSLDVIIEKLGITDDVAGA. One copy of the Alpha-1 repeat lies at 372 to 412; the sequence is VAGATFMAAGGSAPELFTSVIGVFVSFDDVGIGTIVGSAVF. Residues 376–396 form a helical membrane-spanning segment; it reads TFMAAGGSAPELFTSVIGVFV. The Cytoplasmic portion of the chain corresponds to 397-402; sequence SFDDVG. A helical membrane pass occupies residues 403–423; it reads IGTIVGSAVFNILFVIGMCAL. At 424–433 the chain is on the extracellular side; it reads FSKTVLSLTW. A helical membrane pass occupies residues 434 to 454; that stretch reads WPLFRDCSFYSISLLVLIYFF. Residues 455–458 lie on the Cytoplasmic side of the membrane; that stretch reads RDNR. The helical transmembrane segment at 459 to 479 threads the bilayer; the sequence is IFWWEALILFTIYIGYVAFMK. The Extracellular portion of the chain corresponds to 480 to 720; sequence WNVQVETCVK…PDTRTPRGKR (241 aa). The interval 508 to 565 is disordered; it reads PAGNAANSSETSMATQPGGSVTSRAASETRSGPPGSSNAGATGNSSGGGGTSGSTQTG. The span at 512-537 shows a compositional bias: polar residues; sequence AANSSETSMATQPGGSVTSRAASETR. N-linked (GlcNAc...) asparagine glycans are attached at residues Asn514 and Asn551. A compositionally biased stretch (low complexity) spans 542–551; that stretch reads GSSNAGATGN. The chain crosses the membrane as a helical span at residues 721-741; that stretch reads FFPVTFIGSIVWIAAFSYLMV. Over 742–756 the chain is Cytoplasmic; the sequence is WWANVAGDTARIPPE. The helical transmembrane segment at 757–777 threads the bilayer; sequence VMGLTFLAAGTSIPDLITSVI. One copy of the Alpha-2 repeat lies at 764 to 795; the sequence is AAGTSIPDLITSVIVARKGFGDMAVSSSVGSN. Topologically, residues 778–795 are extracellular; it reads VARKGFGDMAVSSSVGSN. The chain crosses the membrane as a helical span at residues 796–816; that stretch reads IFDVTVGLPIPWLLYGIIYGA. The Cytoplasmic segment spans residues 817-822; that stretch reads PVEVNS. A helical membrane pass occupies residues 823–843; it reads VGMVCSITILFMMLVFVVMSI. The Extracellular segment spans residues 844–852; the sequence is ACFRWRMNK. Residues 853–873 form a helical membrane-spanning segment; sequence GLGFTMFLLYFAFVAVSLMFE. At 874-881 the chain is on the cytoplasmic side; that stretch reads YDVITCPF.

Belongs to the Ca(2+):cation antiporter (CaCA) (TC 2.A.19) family. SLC24A subfamily. Expressed in the adult nervous system. Expressed in the photoreceptor cells as well as in the lamina, medulla, and optic lobes of the brain.

The protein localises to the membrane. Functionally, may function in the removal and maintenance of calcium homeostasis during signaling in the adult and in signaling events during embryogenesis and patterning of imaginal disks. Transports one Ca(2+) and 1 K(+) in exchange for 4 Na(+). The protein is Sodium/potassium/calcium exchanger Nckx30C (Nckx30C) of Drosophila melanogaster (Fruit fly).